Consider the following 461-residue polypeptide: Cysteine--tRNA ligase (461 aa).

Zn(2+) is bound at residue C28. Positions 30–40 match the 'HIGH' region motif; the sequence is VTIYDLCHIGH. Residues C209, H234, and E238 each coordinate Zn(2+). A 'KMSKS' region motif is present at residues 266-270; the sequence is KMSKS. K269 contacts ATP.

It belongs to the class-I aminoacyl-tRNA synthetase family. As to quaternary structure, monomer. Requires Zn(2+) as cofactor.

The protein resides in the cytoplasm. The catalysed reaction is tRNA(Cys) + L-cysteine + ATP = L-cysteinyl-tRNA(Cys) + AMP + diphosphate. This chain is Cysteine--tRNA ligase, found in Hamiltonella defensa subsp. Acyrthosiphon pisum (strain 5AT).